A 219-amino-acid polypeptide reads, in one-letter code: Ribosomal RNA small subunit methyltransferase G (219 aa).

Residues Gly85, Leu90, 136 to 137, and Arg151 contribute to the S-adenosyl-L-methionine site; that span reads VE.

Belongs to the methyltransferase superfamily. RNA methyltransferase RsmG family.

The protein resides in the cytoplasm. The catalysed reaction is guanosine(527) in 16S rRNA + S-adenosyl-L-methionine = N(7)-methylguanosine(527) in 16S rRNA + S-adenosyl-L-homocysteine. Functionally, specifically methylates the N7 position of guanine in position 527 of 16S rRNA. This chain is Ribosomal RNA small subunit methyltransferase G, found in Cellvibrio japonicus (strain Ueda107) (Pseudomonas fluorescens subsp. cellulosa).